Here is a 686-residue protein sequence, read N- to C-terminus: Restriction of telomere capping protein 5 (686 aa).

A compositionally biased stretch (basic and acidic residues) spans Glu-155–Gln-176. Disordered regions lie at residues Glu-155–Asp-198, Ser-326–Thr-355, and Gln-522–Ala-559. A compositionally biased stretch (acidic residues) spans Pro-188–Asp-198. A TLDc domain is found at Ala-366–Ile-610. The span at Ser-544–Gly-553 shows a compositional bias: polar residues.

This sequence belongs to the RTC5 family.

Its subcellular location is the cytoplasm. Functionally, may be involved in a process influencing telomere capping. This is Restriction of telomere capping protein 5 (rtc5) from Talaromyces stipitatus (strain ATCC 10500 / CBS 375.48 / QM 6759 / NRRL 1006) (Penicillium stipitatum).